Consider the following 209-residue polypeptide: Thymidylate kinase (209 aa).

13 to 20 contributes to the ATP binding site; sequence GLEGAGKS.

The protein belongs to the thymidylate kinase family.

It catalyses the reaction dTMP + ATP = dTDP + ADP. Its function is as follows. Phosphorylation of dTMP to form dTDP in both de novo and salvage pathways of dTTP synthesis. In Shewanella sp. (strain ANA-3), this protein is Thymidylate kinase.